The following is a 431-amino-acid chain: Adenylosuccinate synthetase (431 aa).

Residues 12–18 (GDEGKGK) and 40–42 (GHT) each bind GTP. Residue Asp13 is the Proton acceptor of the active site. Asp13 and Gly40 together coordinate Mg(2+). Residues 13 to 16 (DEGK), 38 to 41 (NAGH), Thr131, Arg145, Gln225, Thr240, and Arg304 each bind IMP. His41 serves as the catalytic Proton donor. Position 300–306 (300–306 (TVTGRKR)) interacts with substrate. Residues Arg306, 332-334 (KLD), and 414-416 (STS) contribute to the GTP site.

The protein belongs to the adenylosuccinate synthetase family. In terms of assembly, homodimer. The cofactor is Mg(2+).

It localises to the cytoplasm. It carries out the reaction IMP + L-aspartate + GTP = N(6)-(1,2-dicarboxyethyl)-AMP + GDP + phosphate + 2 H(+). It functions in the pathway purine metabolism; AMP biosynthesis via de novo pathway; AMP from IMP: step 1/2. Plays an important role in the de novo pathway of purine nucleotide biosynthesis. Catalyzes the first committed step in the biosynthesis of AMP from IMP. This Roseobacter denitrificans (strain ATCC 33942 / OCh 114) (Erythrobacter sp. (strain OCh 114)) protein is Adenylosuccinate synthetase.